The primary structure comprises 357 residues: NADH-quinone oxidoreductase subunit H (357 aa).

Transmembrane regions (helical) follow at residues 20 to 40 (WLVV…ILCV), 92 to 112 (ILFI…WAVV), 127 to 147 (LLYV…AGWA), 165 to 185 (VSYE…SGSL), 206 to 226 (FLSW…ISAV), 268 to 288 (ILLS…PIDI), 294 to 314 (IPGW…FIWF), and 329 to 349 (LGWK…AIWM).

Belongs to the complex I subunit 1 family. In terms of assembly, NDH-1 is composed of 14 different subunits. Subunits NuoA, H, J, K, L, M, N constitute the membrane sector of the complex.

Its subcellular location is the cell inner membrane. The enzyme catalyses a quinone + NADH + 5 H(+)(in) = a quinol + NAD(+) + 4 H(+)(out). In terms of biological role, NDH-1 shuttles electrons from NADH, via FMN and iron-sulfur (Fe-S) centers, to quinones in the respiratory chain. The immediate electron acceptor for the enzyme in this species is believed to be ubiquinone. Couples the redox reaction to proton translocation (for every two electrons transferred, four hydrogen ions are translocated across the cytoplasmic membrane), and thus conserves the redox energy in a proton gradient. This subunit may bind ubiquinone. This chain is NADH-quinone oxidoreductase subunit H, found in Bordetella avium (strain 197N).